The primary structure comprises 212 residues: Pyridoxine/pyridoxamine 5'-phosphate oxidase (212 aa).

Residues 7–10 (RREY) and K66 each bind substrate. Residues 61-66 (RIVLLK), 76-77 (YT), R82, K83, and Q105 contribute to the FMN site. Substrate is bound by residues Y123, R127, and S131. Residues 140–141 (QS) and W185 contribute to the FMN site. 191–193 (RLH) provides a ligand contact to substrate. Position 195 (R195) interacts with FMN.

It belongs to the pyridoxamine 5'-phosphate oxidase family. As to quaternary structure, homodimer. Requires FMN as cofactor.

It catalyses the reaction pyridoxamine 5'-phosphate + O2 + H2O = pyridoxal 5'-phosphate + H2O2 + NH4(+). It carries out the reaction pyridoxine 5'-phosphate + O2 = pyridoxal 5'-phosphate + H2O2. It functions in the pathway cofactor metabolism; pyridoxal 5'-phosphate salvage; pyridoxal 5'-phosphate from pyridoxamine 5'-phosphate: step 1/1. The protein operates within cofactor metabolism; pyridoxal 5'-phosphate salvage; pyridoxal 5'-phosphate from pyridoxine 5'-phosphate: step 1/1. In terms of biological role, catalyzes the oxidation of either pyridoxine 5'-phosphate (PNP) or pyridoxamine 5'-phosphate (PMP) into pyridoxal 5'-phosphate (PLP). The polypeptide is Pyridoxine/pyridoxamine 5'-phosphate oxidase (Hahella chejuensis (strain KCTC 2396)).